The chain runs to 527 residues: Probable pectinesterase/pectinesterase inhibitor 32 (527 aa).

The first 24 residues, 1 to 24 (MAKFRQMGSSIFFLFLIIISLCSA), serve as a signal peptide directing secretion. The interval 25 to 165 (HKEAFSSTDL…GTTVRNLLTM (141 aa)) is pectinesterase inhibitor 32. Asn-110, Asn-209, Asn-224, and Asn-280 each carry an N-linked (GlcNAc...) asparagine glycan. Residues 214-511 (DAVVAADGTG…FTVSQLIQGN (298 aa)) are pectinesterase 32. Thr-289 and Gln-319 together coordinate substrate. Catalysis depends on Asp-342, which acts as the Proton donor; for pectinesterase activity. A disulfide bridge connects residues Cys-356 and Cys-376. Asp-363 (nucleophile; for pectinesterase activity) is an active-site residue. Residue Asn-423 is glycosylated (N-linked (GlcNAc...) asparagine). Substrate is bound by residues Arg-431 and Trp-433. 2 N-linked (GlcNAc...) asparagine glycosylation sites follow: Asn-494 and Asn-501.

This sequence in the N-terminal section; belongs to the PMEI family. In the C-terminal section; belongs to the pectinesterase family. Expressed in siliques.

Its subcellular location is the secreted. It localises to the cell wall. The enzyme catalyses [(1-&gt;4)-alpha-D-galacturonosyl methyl ester](n) + n H2O = [(1-&gt;4)-alpha-D-galacturonosyl](n) + n methanol + n H(+). Its pathway is glycan metabolism; pectin degradation; 2-dehydro-3-deoxy-D-gluconate from pectin: step 1/5. Functionally, acts in the modification of cell walls via demethylesterification of cell wall pectin. The protein is Probable pectinesterase/pectinesterase inhibitor 32 (PME32) of Arabidopsis thaliana (Mouse-ear cress).